Reading from the N-terminus, the 449-residue chain is Bifunctional protein GlmU (449 aa).

The segment at methionine 1–cysteine 231 is pyrophosphorylase. Residues leucine 10–glycine 13, lysine 24, glutamine 77, and glycine 82–threonine 83 each bind UDP-N-acetyl-alpha-D-glucosamine. Aspartate 107 provides a ligand contact to Mg(2+). Positions 143, 157, 172, and 229 each coordinate UDP-N-acetyl-alpha-D-glucosamine. Asparagine 229 is a Mg(2+) binding site. A linker region spans residues phenylalanine 232–serine 252. The N-acetyltransferase stretch occupies residues glycine 253–lysine 449. UDP-N-acetyl-alpha-D-glucosamine contacts are provided by arginine 318 and lysine 336. The active-site Proton acceptor is the histidine 348. UDP-N-acetyl-alpha-D-glucosamine-binding residues include tyrosine 351 and asparagine 362. Acetyl-CoA-binding positions include alanine 365, asparagine 371–tyrosine 372, serine 390, serine 408, and arginine 425.

This sequence in the N-terminal section; belongs to the N-acetylglucosamine-1-phosphate uridyltransferase family. The protein in the C-terminal section; belongs to the transferase hexapeptide repeat family. In terms of assembly, homotrimer. It depends on Mg(2+) as a cofactor.

It is found in the cytoplasm. The enzyme catalyses alpha-D-glucosamine 1-phosphate + acetyl-CoA = N-acetyl-alpha-D-glucosamine 1-phosphate + CoA + H(+). It catalyses the reaction N-acetyl-alpha-D-glucosamine 1-phosphate + UTP + H(+) = UDP-N-acetyl-alpha-D-glucosamine + diphosphate. Its pathway is nucleotide-sugar biosynthesis; UDP-N-acetyl-alpha-D-glucosamine biosynthesis; N-acetyl-alpha-D-glucosamine 1-phosphate from alpha-D-glucosamine 6-phosphate (route II): step 2/2. It functions in the pathway nucleotide-sugar biosynthesis; UDP-N-acetyl-alpha-D-glucosamine biosynthesis; UDP-N-acetyl-alpha-D-glucosamine from N-acetyl-alpha-D-glucosamine 1-phosphate: step 1/1. The protein operates within bacterial outer membrane biogenesis; LPS lipid A biosynthesis. Functionally, catalyzes the last two sequential reactions in the de novo biosynthetic pathway for UDP-N-acetylglucosamine (UDP-GlcNAc). The C-terminal domain catalyzes the transfer of acetyl group from acetyl coenzyme A to glucosamine-1-phosphate (GlcN-1-P) to produce N-acetylglucosamine-1-phosphate (GlcNAc-1-P), which is converted into UDP-GlcNAc by the transfer of uridine 5-monophosphate (from uridine 5-triphosphate), a reaction catalyzed by the N-terminal domain. The chain is Bifunctional protein GlmU from Bartonella bacilliformis (strain ATCC 35685 / KC583 / Herrer 020/F12,63).